Here is a 346-residue protein sequence, read N- to C-terminus: ATP-dependent 6-phosphofructokinase (346 aa).

ATP contacts are provided by residues G13, 76–77, and 106–109; these read RL and GEGT. E107 contacts Mg(2+). Substrate is bound by residues 129–131, R166, 173–175, E226, R270, and 276–279; these read TID, MGR, and HIQR. Residue D131 is the Proton acceptor of the active site.

Belongs to the phosphofructokinase type A (PFKA) family. Mixed-substrate PFK group III subfamily. Homodimer or homotetramer. Requires Mg(2+) as cofactor.

It localises to the cytoplasm. It carries out the reaction beta-D-fructose 6-phosphate + ATP = beta-D-fructose 1,6-bisphosphate + ADP + H(+). The protein operates within carbohydrate degradation; glycolysis; D-glyceraldehyde 3-phosphate and glycerone phosphate from D-glucose: step 3/4. Its function is as follows. Catalyzes the phosphorylation of D-fructose 6-phosphate to fructose 1,6-bisphosphate by ATP, the first committing step of glycolysis. The sequence is that of ATP-dependent 6-phosphofructokinase from Corynebacterium efficiens (strain DSM 44549 / YS-314 / AJ 12310 / JCM 11189 / NBRC 100395).